The chain runs to 410 residues: LL-diaminopimelate aminotransferase (410 aa).

2 residues coordinate substrate: tyrosine 15 and glycine 42. Residues tyrosine 72, 108 to 109 (AK), tyrosine 132, asparagine 187, tyrosine 218, and 246 to 248 (SFS) contribute to the pyridoxal 5'-phosphate site. The substrate site is built by lysine 109, tyrosine 132, and asparagine 187. At lysine 249 the chain carries N6-(pyridoxal phosphate)lysine. Residues arginine 257 and asparagine 292 each coordinate pyridoxal 5'-phosphate. Substrate-binding residues include asparagine 292 and arginine 388.

Belongs to the class-I pyridoxal-phosphate-dependent aminotransferase family. LL-diaminopimelate aminotransferase subfamily. As to quaternary structure, homodimer. Requires pyridoxal 5'-phosphate as cofactor.

It catalyses the reaction (2S,6S)-2,6-diaminopimelate + 2-oxoglutarate = (S)-2,3,4,5-tetrahydrodipicolinate + L-glutamate + H2O + H(+). It participates in amino-acid biosynthesis; L-lysine biosynthesis via DAP pathway; LL-2,6-diaminopimelate from (S)-tetrahydrodipicolinate (aminotransferase route): step 1/1. In terms of biological role, involved in the synthesis of meso-diaminopimelate (m-DAP or DL-DAP), required for both lysine and peptidoglycan biosynthesis. Catalyzes the direct conversion of tetrahydrodipicolinate to LL-diaminopimelate. Can also use m-DAP instead of LL-DAP as the amino-group donor. The protein is LL-diaminopimelate aminotransferase of Acetivibrio thermocellus (strain ATCC 27405 / DSM 1237 / JCM 9322 / NBRC 103400 / NCIMB 10682 / NRRL B-4536 / VPI 7372) (Clostridium thermocellum).